Consider the following 384-residue polypeptide: ATP phosphoribosyltransferase regulatory subunit (384 aa).

It belongs to the class-II aminoacyl-tRNA synthetase family. HisZ subfamily. In terms of assembly, heteromultimer composed of HisG and HisZ subunits.

The protein resides in the cytoplasm. Its pathway is amino-acid biosynthesis; L-histidine biosynthesis; L-histidine from 5-phospho-alpha-D-ribose 1-diphosphate: step 1/9. In terms of biological role, required for the first step of histidine biosynthesis. May allow the feedback regulation of ATP phosphoribosyltransferase activity by histidine. This Rhodospirillum rubrum (strain ATCC 11170 / ATH 1.1.1 / DSM 467 / LMG 4362 / NCIMB 8255 / S1) protein is ATP phosphoribosyltransferase regulatory subunit.